The following is a 745-amino-acid chain: Polyribonucleotide nucleotidyltransferase (745 aa).

Residues D487 and D493 each contribute to the Mg(2+) site. A KH domain is found at 554 to 613 (PSTTTIKIDKDKIRDIIGPGGKVIKEICEISGAKIDISDDGTVSIYASDRDKLKVALDKI). The S1 motif domain maps to 623-691 (GEIFNGTVMK…NKGKAKLTIK (69 aa)). The segment at 691 to 745 (KNADKDKSSNNTKPKTNAKDNSEPEQRRDSSKKRAWNEDNNAETAEVITERKYFN) is disordered. Positions 707-719 (NAKDNSEPEQRRD) are enriched in basic and acidic residues.

This sequence belongs to the polyribonucleotide nucleotidyltransferase family. It depends on Mg(2+) as a cofactor.

It is found in the cytoplasm. It catalyses the reaction RNA(n+1) + phosphate = RNA(n) + a ribonucleoside 5'-diphosphate. Involved in mRNA degradation. Catalyzes the phosphorolysis of single-stranded polyribonucleotides processively in the 3'- to 5'-direction. The protein is Polyribonucleotide nucleotidyltransferase of Rickettsia massiliae (strain Mtu5).